We begin with the raw amino-acid sequence, 1132 residues long: Phycobiliprotein ApcE (1132 aa).

Cys-196 lines the (2R,3E)-phycocyanobilin pocket. 4 consecutive PBS-linker domains span residues 253–433, 514–692, 709–887, and 940–1121; these read DQQG…FRKV, LGPK…EKQE, PDID…KQNN, and GRGQ…SSLS.

Belongs to the phycobilisome linker protein family. As to quaternary structure, heterodimer of ApcF (a variant beta-allophycocyanin). Phycobilisomes of this organism are composed of a two cylinder core, from which six rods radiate. The core is mainly composed of allophycocyanin alpha and beta chains and of minor components. Contains one covalently linked bilin chromophore. This protein autochromophorylates.

The protein localises to the cellular thylakoid membrane. Its function is as follows. This protein is postulated to act both as terminal energy acceptor (by its phycobilin-like domains) and as a linker polypeptide (by its repeats and arms) that stabilizes the phycobilisome core architecture. Has intrinsic bilin lyase activity. The protein is Phycobiliprotein ApcE (apcE) of Nostoc sp. (strain PCC 7120 / SAG 25.82 / UTEX 2576).